A 118-amino-acid polypeptide reads, in one-letter code: Large ribosomal subunit protein bL20 (118 aa).

It belongs to the bacterial ribosomal protein bL20 family.

Binds directly to 23S ribosomal RNA and is necessary for the in vitro assembly process of the 50S ribosomal subunit. It is not involved in the protein synthesizing functions of that subunit. This is Large ribosomal subunit protein bL20 from Proteus mirabilis (strain HI4320).